A 337-amino-acid chain; its full sequence is tRNA N6-adenosine threonylcarbamoyltransferase (337 aa).

Residues His-111 and His-115 each coordinate Fe cation. Substrate contacts are provided by residues 134 to 138, Asp-167, Gly-180, and Asn-272; that span reads LVSGG. Asp-300 lines the Fe cation pocket.

Belongs to the KAE1 / TsaD family. Fe(2+) serves as cofactor.

Its subcellular location is the cytoplasm. The catalysed reaction is L-threonylcarbamoyladenylate + adenosine(37) in tRNA = N(6)-L-threonylcarbamoyladenosine(37) in tRNA + AMP + H(+). Its function is as follows. Required for the formation of a threonylcarbamoyl group on adenosine at position 37 (t(6)A37) in tRNAs that read codons beginning with adenine. Is involved in the transfer of the threonylcarbamoyl moiety of threonylcarbamoyl-AMP (TC-AMP) to the N6 group of A37, together with TsaE and TsaB. TsaD likely plays a direct catalytic role in this reaction. The chain is tRNA N6-adenosine threonylcarbamoyltransferase from Salmonella schwarzengrund (strain CVM19633).